A 260-amino-acid chain; its full sequence is UPF0246 protein Bcenmc03_2247 (260 aa).

The protein belongs to the UPF0246 family.

The polypeptide is UPF0246 protein Bcenmc03_2247 (Burkholderia orbicola (strain MC0-3)).